Reading from the N-terminus, the 251-residue chain is Isoprenyl transferase (251 aa).

Asp-31 is an active-site residue. Asp-31 is a binding site for Mg(2+). Substrate is bound by residues 32–35 (GNGR), Trp-36, Arg-44, His-48, and 76–78 (STE). Asn-79 acts as the Proton acceptor in catalysis. Residues Trp-80, Arg-82, Arg-199, and 205-207 (RIS) contribute to the substrate site. Mg(2+) is bound at residue Glu-218.

This sequence belongs to the UPP synthase family. As to quaternary structure, homodimer. The cofactor is Mg(2+).

Its function is as follows. Catalyzes the condensation of isopentenyl diphosphate (IPP) with allylic pyrophosphates generating different type of terpenoids. The polypeptide is Isoprenyl transferase (Thermosynechococcus vestitus (strain NIES-2133 / IAM M-273 / BP-1)).